A 257-amino-acid chain; its full sequence is UPF0246 protein CPS_4102 (257 aa).

Belongs to the UPF0246 family.

The protein is UPF0246 protein CPS_4102 of Colwellia psychrerythraea (strain 34H / ATCC BAA-681) (Vibrio psychroerythus).